Reading from the N-terminus, the 300-residue chain is N-acetylmuramic acid 6-phosphate etherase (300 aa).

The SIS domain maps to 57-220 (IAVAFQSGGR…TTGAMIRTGK (164 aa)). The Proton donor role is filled by glutamate 85. Glutamate 116 is a catalytic residue.

Belongs to the GCKR-like family. MurNAc-6-P etherase subfamily. In terms of assembly, homodimer.

It catalyses the reaction N-acetyl-D-muramate 6-phosphate + H2O = N-acetyl-D-glucosamine 6-phosphate + (R)-lactate. The protein operates within amino-sugar metabolism; 1,6-anhydro-N-acetylmuramate degradation. Its pathway is amino-sugar metabolism; N-acetylmuramate degradation. It functions in the pathway cell wall biogenesis; peptidoglycan recycling. In terms of biological role, specifically catalyzes the cleavage of the D-lactyl ether substituent of MurNAc 6-phosphate, producing GlcNAc 6-phosphate and D-lactate. Together with AnmK, is also required for the utilization of anhydro-N-acetylmuramic acid (anhMurNAc) either imported from the medium or derived from its own cell wall murein, and thus plays a role in cell wall recycling. The protein is N-acetylmuramic acid 6-phosphate etherase of Aliivibrio fischeri (strain MJ11) (Vibrio fischeri).